Here is a 204-residue protein sequence, read N- to C-terminus: Urease accessory protein UreG (204 aa).

Residue 12-19 (GPVGSGKT) coordinates GTP.

It belongs to the SIMIBI class G3E GTPase family. UreG subfamily. In terms of assembly, homodimer. UreD, UreF and UreG form a complex that acts as a GTP-hydrolysis-dependent molecular chaperone, activating the urease apoprotein by helping to assemble the nickel containing metallocenter of UreC. The UreE protein probably delivers the nickel.

The protein localises to the cytoplasm. Facilitates the functional incorporation of the urease nickel metallocenter. This process requires GTP hydrolysis, probably effectuated by UreG. In Azotobacter vinelandii (strain DJ / ATCC BAA-1303), this protein is Urease accessory protein UreG.